A 248-amino-acid polypeptide reads, in one-letter code: tRNA (guanine-N(1)-)-methyltransferase (248 aa).

Residues Gly113 and 133-138 (IGDYVL) each bind S-adenosyl-L-methionine.

It belongs to the RNA methyltransferase TrmD family. Homodimer.

It localises to the cytoplasm. It carries out the reaction guanosine(37) in tRNA + S-adenosyl-L-methionine = N(1)-methylguanosine(37) in tRNA + S-adenosyl-L-homocysteine + H(+). In terms of biological role, specifically methylates guanosine-37 in various tRNAs. The protein is tRNA (guanine-N(1)-)-methyltransferase of Shewanella baltica (strain OS223).